The primary structure comprises 201 residues: Histone chaperone asf1a-A (201 aa).

Belongs to the ASF1 family. As to quaternary structure, interacts with histone H3 (including both histone H3.1 and H3.3) and histone H4. Interacts with hira and p60.

Its subcellular location is the nucleus. In terms of biological role, histone chaperone that facilitates histone deposition and histone exchange and removal during nucleosome assembly and disassembly. Not critical for histone deposition during nucleosome assembly. In Xenopus laevis (African clawed frog), this protein is Histone chaperone asf1a-A (asf1aa).